The chain runs to 294 residues: 4-hydroxy-tetrahydrodipicolinate synthase (294 aa).

Position 45 (Thr-45) interacts with pyruvate. The active-site Proton donor/acceptor is the Tyr-133. The active-site Schiff-base intermediate with substrate is the Lys-162. Ile-204 lines the pyruvate pocket.

It belongs to the DapA family. Homotetramer; dimer of dimers.

It localises to the cytoplasm. The catalysed reaction is L-aspartate 4-semialdehyde + pyruvate = (2S,4S)-4-hydroxy-2,3,4,5-tetrahydrodipicolinate + H2O + H(+). Its pathway is amino-acid biosynthesis; L-lysine biosynthesis via DAP pathway; (S)-tetrahydrodipicolinate from L-aspartate: step 3/4. In terms of biological role, catalyzes the condensation of (S)-aspartate-beta-semialdehyde [(S)-ASA] and pyruvate to 4-hydroxy-tetrahydrodipicolinate (HTPA). The sequence is that of 4-hydroxy-tetrahydrodipicolinate synthase from Bartonella quintana (strain Toulouse) (Rochalimaea quintana).